Consider the following 542-residue polypeptide: Chaperonin GroEL (542 aa).

ATP contacts are provided by residues threonine 29–proline 32, aspartate 86–threonine 90, glycine 413, asparagine 476–alanine 478, and aspartate 492.

It belongs to the chaperonin (HSP60) family. In terms of assembly, forms a cylinder of 14 subunits composed of two heptameric rings stacked back-to-back. Interacts with the co-chaperonin GroES.

The protein resides in the cytoplasm. The enzyme catalyses ATP + H2O + a folded polypeptide = ADP + phosphate + an unfolded polypeptide.. Its function is as follows. Together with its co-chaperonin GroES, plays an essential role in assisting protein folding. The GroEL-GroES system forms a nano-cage that allows encapsulation of the non-native substrate proteins and provides a physical environment optimized to promote and accelerate protein folding. This Bacillus cytotoxicus (strain DSM 22905 / CIP 110041 / 391-98 / NVH 391-98) protein is Chaperonin GroEL.